Reading from the N-terminus, the 216-residue chain is Corrinoid protein DSY3155 (216 aa).

The B12-binding N-terminal domain occupies methionine 1–glycine 90. The region spanning lysine 93–lysine 216 is the B12-binding domain. A methylcob(III)alamin-binding site is contributed by histidine 106.

The protein belongs to the methylamine corrinoid protein family.

In terms of biological role, probably harbors a corrinoid prosthetic group and acts as a methyl group carrier between MtgB and MtgA. A methyl group from glycine betaine is likely first transferred to the corrinoid prosthetic group of the enzyme by MtgB, and then transferred to tetrahydrofolate (THF) by MtgA. The methyl group may then be ultimately converted to carbon dioxide, and its oxidation would also provide reducing equivalents for anaerobic respiration. Thus, may function in the pathway that allows anaerobic methylotrophic growth of D.hafniense using glycine betaine. This is Corrinoid protein DSY3155 from Desulfitobacterium hafniense (strain Y51).